The following is a 304-amino-acid chain: Acetylglutamate kinase (304 aa).

Substrate-binding positions include 77–78, Arg99, and Asn193; that span reads GG.

Belongs to the acetylglutamate kinase family. ArgB subfamily.

Its subcellular location is the cytoplasm. It carries out the reaction N-acetyl-L-glutamate + ATP = N-acetyl-L-glutamyl 5-phosphate + ADP. The protein operates within amino-acid biosynthesis; L-arginine biosynthesis; N(2)-acetyl-L-ornithine from L-glutamate: step 2/4. In terms of biological role, catalyzes the ATP-dependent phosphorylation of N-acetyl-L-glutamate. The sequence is that of Acetylglutamate kinase from Chlorobium limicola (strain DSM 245 / NBRC 103803 / 6330).